Consider the following 68-residue polypeptide: Large ribosomal subunit protein bL35 (68 aa).

This sequence belongs to the bacterial ribosomal protein bL35 family.

The polypeptide is Large ribosomal subunit protein bL35 (Rickettsia typhi (strain ATCC VR-144 / Wilmington)).